The following is a 749-amino-acid chain: ATP-dependent zinc metalloprotease FtsH 3 (749 aa).

A compositionally biased stretch (basic and acidic residues) spans 1–17; that stretch reads MTGDPPERRSNGDRLPA. Residues 1–67 form a disordered region; sequence MTGDPPERRS…GRNGGGMRPF (67 aa). Over 1–75 the chain is Cytoplasmic; it reads MTGDPPERRS…PFRFPGGRWG (75 aa). The chain crosses the membrane as a helical span at residues 76–96; sequence ILVFILVLLGLNWWISSNALA. Topologically, residues 97–186 are extracellular; it reads PSERVRVPYS…NASPADNGPS (90 aa). The chain crosses the membrane as a helical span at residues 187 to 207; it reads LLVSILLGFGPVILIIALFVF. The Cytoplasmic segment spans residues 208–749; it reads LSRRMAGAAG…LGGSVRAGDA (542 aa). Residue 281–288 participates in ATP binding; sequence GQPGTGKT. Residue histidine 504 participates in Zn(2+) binding. The active site involves glutamate 505. Residues histidine 508 and aspartate 580 each contribute to the Zn(2+) site. A compositionally biased stretch (basic and acidic residues) spans 679-689; sequence GLEHMRPERVE. The disordered stretch occupies residues 679-749; the sequence is GLEHMRPERV…LGGSVRAGDA (71 aa).

It in the central section; belongs to the AAA ATPase family. The protein in the C-terminal section; belongs to the peptidase M41 family. Homohexamer. It depends on Zn(2+) as a cofactor.

The protein resides in the cell membrane. Functionally, acts as a processive, ATP-dependent zinc metallopeptidase for both cytoplasmic and membrane proteins. Plays a role in the quality control of integral membrane proteins. The sequence is that of ATP-dependent zinc metalloprotease FtsH 3 from Conexibacter woesei (strain DSM 14684 / CCUG 47730 / CIP 108061 / JCM 11494 / NBRC 100937 / ID131577).